Here is a 165-residue protein sequence, read N- to C-terminus: SsrA-binding protein (165 aa).

The tract at residues 141-165 (EDRRHAIAERETKREMDREISRRRR) is disordered.

Belongs to the SmpB family.

Its subcellular location is the cytoplasm. Functionally, required for rescue of stalled ribosomes mediated by trans-translation. Binds to transfer-messenger RNA (tmRNA), required for stable association of tmRNA with ribosomes. tmRNA and SmpB together mimic tRNA shape, replacing the anticodon stem-loop with SmpB. tmRNA is encoded by the ssrA gene; the 2 termini fold to resemble tRNA(Ala) and it encodes a 'tag peptide', a short internal open reading frame. During trans-translation Ala-aminoacylated tmRNA acts like a tRNA, entering the A-site of stalled ribosomes, displacing the stalled mRNA. The ribosome then switches to translate the ORF on the tmRNA; the nascent peptide is terminated with the 'tag peptide' encoded by the tmRNA and targeted for degradation. The ribosome is freed to recommence translation, which seems to be the essential function of trans-translation. The sequence is that of SsrA-binding protein from Anaeromyxobacter sp. (strain Fw109-5).